The primary structure comprises 275 residues: Tryptophan synthase alpha chain (275 aa).

E51 serves as the catalytic Proton acceptor.

The protein belongs to the TrpA family. As to quaternary structure, tetramer of two alpha and two beta chains.

It catalyses the reaction (1S,2R)-1-C-(indol-3-yl)glycerol 3-phosphate + L-serine = D-glyceraldehyde 3-phosphate + L-tryptophan + H2O. It participates in amino-acid biosynthesis; L-tryptophan biosynthesis; L-tryptophan from chorismate: step 5/5. Its function is as follows. The alpha subunit is responsible for the aldol cleavage of indoleglycerol phosphate to indole and glyceraldehyde 3-phosphate. This is Tryptophan synthase alpha chain from Caulobacter vibrioides (strain ATCC 19089 / CIP 103742 / CB 15) (Caulobacter crescentus).